The chain runs to 142 residues: Hemoglobin subunit alpha-A (142 aa).

A Globin domain is found at 2-142 (VLSAADKTNV…VATVLTAKYR (141 aa)). H59 lines the O2 pocket. Position 88 (H88) interacts with heme b.

It belongs to the globin family. In terms of assembly, heterotetramer of two alpha chains and two beta chains. Red blood cells.

Functionally, involved in oxygen transport from the lung to the various peripheral tissues. The sequence is that of Hemoglobin subunit alpha-A (HBAA) from Apus apus (Common swift).